We begin with the raw amino-acid sequence, 453 residues long: Aspartic proteinase PCS1 (453 aa).

Positions 1–18 (MFSRFHALFLLLVLSVRT) are cleaved as a signal peptide. The propeptide at 19–57 (YKCVSSSSSSSSSFSFSSFSSSSSSQTLVLPLKTRITPT) is activation peptide. Asn-70 and Asn-85 each carry an N-linked (GlcNAc...) asparagine glycan. The Peptidase A1 domain occupies 73–438 (LTVTLTVGTP…DLQRSRIGLA (366 aa)). Asp-91 is a catalytic residue. Asn-102, Asn-175, Asn-178, and Asn-243 each carry an N-linked (GlcNAc...) asparagine glycan. Asp-304 is a catalytic residue. N-linked (GlcNAc...) asparagine glycosylation is found at Asn-326 and Asn-395.

The protein belongs to the peptidase A1 family. As to expression, expressed specifically in developing gametophytes and developing seeds.

The protein localises to the endoplasmic reticulum. Its function is as follows. Embryo-specific aspartic protease that limits programmed cell death during reproductive development. Possesses peptidase activity toward casein in vitro. This chain is Aspartic proteinase PCS1 (PCS1), found in Arabidopsis thaliana (Mouse-ear cress).